The sequence spans 122 residues: Small ribosomal subunit protein uS13 (122 aa).

Residues 96 to 122 form a disordered region; sequence LPVRGQRTKTNSRTRKGKRKTIAGKKK. Residues 101-122 are compositionally biased toward basic residues; sequence QRTKTNSRTRKGKRKTIAGKKK.

It belongs to the universal ribosomal protein uS13 family. Part of the 30S ribosomal subunit. Forms a loose heterodimer with protein S19. Forms two bridges to the 50S subunit in the 70S ribosome.

Functionally, located at the top of the head of the 30S subunit, it contacts several helices of the 16S rRNA. In the 70S ribosome it contacts the 23S rRNA (bridge B1a) and protein L5 of the 50S subunit (bridge B1b), connecting the 2 subunits; these bridges are implicated in subunit movement. Contacts the tRNAs in the A and P-sites. The sequence is that of Small ribosomal subunit protein uS13 from Chlamydia trachomatis serovar L2 (strain ATCC VR-902B / DSM 19102 / 434/Bu).